A 238-amino-acid chain; its full sequence is Ribonuclease PH (238 aa).

Residues arginine 86 and glycine 124–arginine 126 each bind phosphate.

It belongs to the RNase PH family. Homohexameric ring arranged as a trimer of dimers.

The enzyme catalyses tRNA(n+1) + phosphate = tRNA(n) + a ribonucleoside 5'-diphosphate. Phosphorolytic 3'-5' exoribonuclease that plays an important role in tRNA 3'-end maturation. Removes nucleotide residues following the 3'-CCA terminus of tRNAs; can also add nucleotides to the ends of RNA molecules by using nucleoside diphosphates as substrates, but this may not be physiologically important. Probably plays a role in initiation of 16S rRNA degradation (leading to ribosome degradation) during starvation. The sequence is that of Ribonuclease PH from Salmonella choleraesuis (strain SC-B67).